Consider the following 372-residue polypeptide: MVKFNNIVYDPQLTDKKFPVKASDPEREAKLVVLQPVGYPFVCNLMESPRIDAVNKELFEIYARDQWEGFSATEGSYLFDQKLLPDYAFKIIRAHPDGSKITRNTSIILLENEREEFHEVKSDITMDDVIGQEDAKIKCRIIMRYLEDPDRFRDWAPRNVLFHGSPGTGKTMLAKSLANELRVPLYLIKATSLIGEHVGDGARQIHELYELASKTAPSVIFIDEMDAIGLDRRFQSLRGDVSEVVNALLTEMDGINQNWGVVTIGATNNPELLDNAIRSRFEEEIEFKLPGDDERRMMLEKYIETMPLDVDFSVDKLVKLTKGMSGRDIKERVLKTALHRALADESPRVEREHIEYALKERDLKSEPRHMFA.

164 to 171 lines the ATP pocket; the sequence is GSPGTGKT.

It belongs to the AAA ATPase family.

Functionally, the 26S proteasome is involved in the ATP-dependent degradation of ubiquitinated proteins. The regulatory (or ATPase) complex confers ATP dependency and substrate specificity to the 26S complex. The chain is Putative 26S proteasome regulatory subunit homolog MTBMA_c13930 from Methanothermobacter marburgensis (strain ATCC BAA-927 / DSM 2133 / JCM 14651 / NBRC 100331 / OCM 82 / Marburg) (Methanobacterium thermoautotrophicum).